We begin with the raw amino-acid sequence, 214 residues long: Probable septum site-determining protein MinC (214 aa).

It belongs to the MinC family. Interacts with MinD and FtsZ.

In terms of biological role, cell division inhibitor that blocks the formation of polar Z ring septums. Rapidly oscillates between the poles of the cell to destabilize FtsZ filaments that have formed before they mature into polar Z rings. Prevents FtsZ polymerization. This is Probable septum site-determining protein MinC from Caldanaerobacter subterraneus subsp. tengcongensis (strain DSM 15242 / JCM 11007 / NBRC 100824 / MB4) (Thermoanaerobacter tengcongensis).